The sequence spans 405 residues: Succinyl-CoA--L-malate CoA-transferase beta subunit (405 aa).

The active-site Nucleophile is the D175.

Belongs to the CoA-transferase III family. In terms of assembly, forms a large complex composed of six heterodimers (alpha, beta).

The catalysed reaction is succinyl-CoA + (S)-malate = (S)-malyl-CoA + succinate. It catalyses the reaction (3S)-citramalate + succinyl-CoA = (3S)-citramalyl-CoA + succinate. Involved in the 3-hydroxypropionate cycle used for autotrophic carbon dioxide fixation. Catalyzes the transfer of CoA moiety from succinyl-CoA to L-malate to yield L-malyl-CoA. This is Succinyl-CoA--L-malate CoA-transferase beta subunit (smtB) from Chloroflexus aurantiacus (strain ATCC 29366 / DSM 635 / J-10-fl).